Consider the following 135-residue polypeptide: Retinol-binding protein 1 (135 aa).

Omega-N-methylarginine is present on Trp-9. Positions 22-32 (RALDVNVALRK) are important for interaction with STRA6. Lys-41, Met-63, and Gln-109 together coordinate all-trans-retinol.

This sequence belongs to the calycin superfamily. Fatty-acid binding protein (FABP) family. As to quaternary structure, interacts (only as retinol-free apoprotein) with STRA6. In terms of tissue distribution, detected in nearly all the tissues with higher expression in adult ovary, pancreas, pituitary gland and adrenal gland, and fetal liver.

The protein resides in the cytoplasm. Its subcellular location is the lipid droplet. Functionally, cytoplasmic retinol-binding protein. Accepts retinol from the transport protein STRA6, and thereby contributes to retinol uptake, storage and retinoid homeostasis. This chain is Retinol-binding protein 1 (RBP1), found in Homo sapiens (Human).